Consider the following 126-residue polypeptide: Protein TrbF (126 aa).

2 helical membrane-spanning segments follow: residues 31–54 (GLSL…FDAC) and 71–98 (WNIL…SVPN).

It is found in the cell inner membrane. This chain is Protein TrbF (trbF), found in Escherichia coli (strain K12).